The sequence spans 261 residues: Thiazole synthase (261 aa).

K95 (schiff-base intermediate with DXP) is an active-site residue. 1-deoxy-D-xylulose 5-phosphate-binding positions include G156, 182-183 (AG), and 204-205 (NT).

This sequence belongs to the ThiG family. In terms of assembly, homotetramer. Forms heterodimers with either ThiH or ThiS.

The protein localises to the cytoplasm. The catalysed reaction is [ThiS sulfur-carrier protein]-C-terminal-Gly-aminoethanethioate + 2-iminoacetate + 1-deoxy-D-xylulose 5-phosphate = [ThiS sulfur-carrier protein]-C-terminal Gly-Gly + 2-[(2R,5Z)-2-carboxy-4-methylthiazol-5(2H)-ylidene]ethyl phosphate + 2 H2O + H(+). It functions in the pathway cofactor biosynthesis; thiamine diphosphate biosynthesis. Catalyzes the rearrangement of 1-deoxy-D-xylulose 5-phosphate (DXP) to produce the thiazole phosphate moiety of thiamine. Sulfur is provided by the thiocarboxylate moiety of the carrier protein ThiS. In vitro, sulfur can be provided by H(2)S. The chain is Thiazole synthase from Pectobacterium atrosepticum (strain SCRI 1043 / ATCC BAA-672) (Erwinia carotovora subsp. atroseptica).